Consider the following 150-residue polypeptide: 3-hydroxyacyl-[acyl-carrier-protein] dehydratase FabZ (150 aa).

H54 is an active-site residue.

It belongs to the thioester dehydratase family. FabZ subfamily.

The protein localises to the cytoplasm. It carries out the reaction a (3R)-hydroxyacyl-[ACP] = a (2E)-enoyl-[ACP] + H2O. Its function is as follows. Involved in unsaturated fatty acids biosynthesis. Catalyzes the dehydration of short chain beta-hydroxyacyl-ACPs and long chain saturated and unsaturated beta-hydroxyacyl-ACPs. The sequence is that of 3-hydroxyacyl-[acyl-carrier-protein] dehydratase FabZ from Vibrio campbellii (strain ATCC BAA-1116).